The chain runs to 148 residues: Large ribosomal subunit protein bL9 (148 aa).

Belongs to the bacterial ribosomal protein bL9 family.

Its function is as follows. Binds to the 23S rRNA. This Aeromonas salmonicida (strain A449) protein is Large ribosomal subunit protein bL9.